The following is a 341-amino-acid chain: Mitochondrial transcription factor 1 (341 aa).

Residues leucine 23, glutamate 77, aspartate 101, and asparagine 137 each coordinate S-adenosyl-L-methionine.

The protein belongs to the class I-like SAM-binding methyltransferase superfamily. rRNA adenine N(6)-methyltransferase family.

It localises to the mitochondrion. In terms of biological role, mitochondrial transcription factor that confers selective promoter recognition on the core subunit of the yeast mitochondrial RNA polymerase. Interacts with DNA in a non-specific manner. The sequence is that of Mitochondrial transcription factor 1 (MTF1) from Saccharomyces paradoxus (Yeast).